The sequence spans 251 residues: Hydroxyacylglutathione hydrolase (251 aa).

H59, H61, D63, H64, H118, D141, and H179 together coordinate Zn(2+).

This sequence belongs to the metallo-beta-lactamase superfamily. Glyoxalase II family. In terms of assembly, monomer. The cofactor is Zn(2+).

The enzyme catalyses an S-(2-hydroxyacyl)glutathione + H2O = a 2-hydroxy carboxylate + glutathione + H(+). It functions in the pathway secondary metabolite metabolism; methylglyoxal degradation; (R)-lactate from methylglyoxal: step 2/2. Functionally, thiolesterase that catalyzes the hydrolysis of S-D-lactoyl-glutathione to form glutathione and D-lactic acid. This is Hydroxyacylglutathione hydrolase from Prochlorococcus marinus (strain NATL1A).